The chain runs to 439 residues: ATP-dependent RNA helicase RhlB (439 aa).

The Q motif motif lies at 9 to 37; the sequence is QKFADLPLHPEVKQALAENGFEFCTPIQA. Residues 40-219 form the Helicase ATP-binding domain; it reads LPVLLQSKDI…YDHMNDPVKV (180 aa). 53-60 is a binding site for ATP; that stretch reads AQTGTGKT. A DEAD box motif is present at residues 165 to 168; the sequence is DEAD. Residues 243 to 390 enclose the Helicase C-terminal domain; the sequence is KIRLLLTLIE…VSNYDRDALL (148 aa). The interval 395 to 439 is disordered; the sequence is PPVKIHRKHPAGARNLRERSGAGRPQGAHRSGGRPPRHDRTRRQP. A compositionally biased stretch (basic residues) spans 425 to 439; the sequence is SGGRPPRHDRTRRQP.

The protein belongs to the DEAD box helicase family. RhlB subfamily. In terms of assembly, component of the RNA degradosome, which is a multiprotein complex involved in RNA processing and mRNA degradation.

Its subcellular location is the cytoplasm. The catalysed reaction is ATP + H2O = ADP + phosphate + H(+). Functionally, DEAD-box RNA helicase involved in RNA degradation. Has RNA-dependent ATPase activity and unwinds double-stranded RNA. This chain is ATP-dependent RNA helicase RhlB, found in Shewanella sp. (strain MR-4).